The sequence spans 708 residues: Ion-translocating oxidoreductase complex subunit C (708 aa).

2 4Fe-4S ferredoxin-type domains span residues glycine 369–tyrosine 397 and lysine 407–phenylalanine 436. [4Fe-4S] cluster is bound by residues cysteine 377, cysteine 380, cysteine 383, cysteine 387, cysteine 416, cysteine 419, cysteine 422, and cysteine 426. Positions alanine 630 to proline 682 are disordered.

This sequence belongs to the 4Fe4S bacterial-type ferredoxin family. RnfC subfamily. As to quaternary structure, the complex is composed of six subunits: RsxA, RsxB, RsxC, RsxD, RsxE and RsxG. Requires [4Fe-4S] cluster as cofactor.

It is found in the cell inner membrane. Part of a membrane-bound complex that couples electron transfer with translocation of ions across the membrane. Required to maintain the reduced state of SoxR. This Escherichia coli O1:K1 / APEC protein is Ion-translocating oxidoreductase complex subunit C.